We begin with the raw amino-acid sequence, 238 residues long: Type III pantothenate kinase (238 aa).

6–13 (DSGNTRIK) provides a ligand contact to ATP. Substrate contacts are provided by residues tyrosine 90 and 97 to 100 (GVDR). The Proton acceptor role is filled by aspartate 99. ATP is bound at residue threonine 122. Threonine 172 is a binding site for substrate.

Belongs to the type III pantothenate kinase family. As to quaternary structure, homodimer. NH4(+) is required as a cofactor. K(+) serves as cofactor.

It is found in the cytoplasm. It carries out the reaction (R)-pantothenate + ATP = (R)-4'-phosphopantothenate + ADP + H(+). It functions in the pathway cofactor biosynthesis; coenzyme A biosynthesis; CoA from (R)-pantothenate: step 1/5. Its function is as follows. Catalyzes the phosphorylation of pantothenate (Pan), the first step in CoA biosynthesis. The protein is Type III pantothenate kinase of Dechloromonas aromatica (strain RCB).